A 347-amino-acid polypeptide reads, in one-letter code: Endothelin receptor type B (347 aa).

At 1–7 the chain is on the extracellular side; sequence EIKETFK. The chain crosses the membrane as a helical span at residues 8–32; that stretch reads YINTVVSCLVFVLGIIGNSTLLRII. Residues 33-43 are Cytoplasmic-facing; sequence YKNKCMRNGPN. A helical transmembrane segment spans residues 44–69; it reads ILIASLALGDLLHIIIDIPISVYKLL. The Extracellular segment spans residues 70-81; that stretch reads AEDWPFGVEMCK. The cysteines at positions 80 and 161 are disulfide-linked. The chain crosses the membrane as a helical span at residues 82-103; it reads LVPFIQKASVGITVLSLCALSI. Topologically, residues 104–124 are cytoplasmic; the sequence is DRYRAVASWSRIKGIGVPKWT. The chain crosses the membrane as a helical span at residues 125 to 149; that stretch reads AVEIVLIWVISVVLAVPEAIAFDMI. Residues 150–177 lie on the Extracellular side of the membrane; that stretch reads TMEYRGKDLRICLLHPTQKTSFMMFYKQ. Residues 178–202 form a helical membrane-spanning segment; it reads AKDWWLFSFYFCLPLAITALFYTLM. The Cytoplasmic portion of the chain corresponds to 203–230; that stretch reads TCEMLRKKSGMQIALNDHLKQRREVAKT. Residues 231–256 form a helical membrane-spanning segment; that stretch reads VFCLVLVFALCWLPLHLSRILKLTIY. Over 257–268 the chain is Extracellular; sequence DQKDPNRCELLS. Residues 269–295 traverse the membrane as a helical segment; sequence FFLVMDYIGINMASLNSCINPIALYLV. Topologically, residues 296–347 are cytoplasmic; sequence SKRFQNCFKSCLCCWCQSKDLLSLEERQSCLKFKANDHGYDNFRSSNKYSSS. S-palmitoyl cysteine attachment occurs at residues Cys309 and Cys311.

The protein belongs to the G-protein coupled receptor 1 family. Endothelin receptor subfamily. EDNRB sub-subfamily.

The protein localises to the cell membrane. In terms of biological role, non-specific receptor for endothelin 1, 2, and 3. Mediates its action by association with G proteins that activate a phosphatidylinositol-calcium second messenger system. The sequence is that of Endothelin receptor type B (EDNRB) from Coturnix japonica (Japanese quail).